The primary structure comprises 243 residues: uncharacterized protein (243 aa).

Composition is skewed to basic and acidic residues over residues 1 to 11 and 167 to 178; these read MSDEGYRELVE and RNRDPPRPSYLR. 2 disordered regions span residues 1–26 and 146–243; these read MSDEGYRELVESKSAPTTPGPWSPDR and ELYQ…CWPF. A compositionally biased stretch (low complexity) spans 185–200; it reads STTTARRPRAMTSTPE.

This is an uncharacterized protein from Canis lupus familiaris (Dog).